The sequence spans 179 residues: Natural killer cells antigen CD94 (179 aa).

Topologically, residues 1–10 (MAVSQTTLWN) are cytoplasmic. Residues 11–31 (LISGILGVICLLLMTTMGILL) traverse the membrane as a helical; Signal-anchor for type II membrane protein segment. The Extracellular segment spans residues 32-179 (KNLLLTESIQ…SRFICKQELM (148 aa)). 4 cysteine pairs are disulfide-bonded: Cys58–Cys70, Cys61–Cys72, Cys89–Cys174, and Cys152–Cys166. One can recognise a C-type lectin domain in the interval 68-175 (HQCNCYLFFD…CEDKSRFICK (108 aa)). Asn93 and Asn125 each carry an N-linked (GlcNAc...) asparagine glycan.

As to quaternary structure, can form disulfide-bonded heterodimer with NKG2 family members KLRC1 and KLRC2. KLRD1-KLRC1 heterodimer interacts with peptide-bound MHC-E-B2M heterotrimeric complex. KLRD1 plays a prominent role in directly interacting with MHC-E. KLRD1-KLRC1 interacts with much higher affinity with peptide-bound MHC-E-B2M than KLRD1-KLRC2. Interacts with the adapter protein TYROBP/DAP12; this interaction is required for cell surface expression and cell activation.

It localises to the cell membrane. In terms of biological role, immune receptor involved in self-nonself discrimination. In complex with KLRC1 or KLRC2 on cytotoxic and regulatory lymphocyte subsets, recognizes non-classical major histocompatibility (MHC) class Ib molecule MHC-E loaded with self-peptides derived from the signal sequence of classical MHC class Ia and non-classical MHC class Ib molecules. Enables cytotoxic cells to monitor the expression of MHC class I molecules in healthy cells and to tolerate self. Primarily functions as a ligand binding subunit as it lacks the capacity to signal. Its function is as follows. KLRD1-KLRC1 acts as an immune inhibitory receptor. Key inhibitory receptor on natural killer (NK) cells that regulates their activation and effector functions. Dominantly counteracts T cell receptor signaling on a subset of memory/effector CD8-positive T cells as part of an antigen-driven response to avoid autoimmunity. On intraepithelial CD8-positive gamma-delta regulatory T cells triggers TGFB1 secretion, which in turn limits the cytotoxic programming of intraepithelial CD8-positive alpha-beta T cells, distinguishing harmless from pathogenic antigens. In MHC-E-rich tumor microenvironment, acts as an immune inhibitory checkpoint and may contribute to progressive loss of effector functions of NK cells and tumor-specific T cells, a state known as cell exhaustion. Upon MHC-E-peptide binding, transmits intracellular signals through KLRC1 immunoreceptor tyrosine-based inhibition motifs (ITIMs) by recruiting INPP5D/SHIP-1 and INPPL1/SHIP-2 tyrosine phosphatases to ITIMs, and ultimately opposing signals transmitted by activating receptors through dephosphorylation of proximal signaling molecules. KLRD1-KLRC2 acts as an immune activating receptor. On cytotoxic lymphocyte subsets recognizes MHC-E loaded with signal sequence-derived peptides from non-classical MHC class Ib MHC-G molecules, likely playing a role in the generation and effector functions of adaptive NK cells and in maternal-fetal tolerance during pregnancy. Regulates the effector functions of terminally differentiated cytotoxic lymphocyte subsets, and in particular may play a role in adaptive NK cell response to viral infection. Upon MHC-E-peptide binding, transmits intracellular signals via the adapter protein TYROBP/DAP12, triggering the phosphorylation of proximal signaling molecules and cell activation. The protein is Natural killer cells antigen CD94 (KLRD1) of Canis lupus familiaris (Dog).